The primary structure comprises 766 residues: Protein phosphatase eya (766 aa).

Residues 22 to 40 show a composition bias toward basic and acidic residues; that stretch reads EPKVKRPKTDHTDTHERNR. Disordered regions lie at residues 22–131, 200–223, 365–419, and 437–489; these read EPKV…IGSL, DGTG…ASLD, VSSP…TGSG, and SSGG…SEAV. Low complexity predominate over residues 45–76; sequence SQQQQQQQPQQQQTHQQQQQQQQQSHQQSHSS. Over residues 89-110 the composition is skewed to gly residues; it reads AGMGVGVGGGGGSGGGVGGGVG. A compositionally biased stretch (low complexity) spans 365–384; it reads VSSPSSSASHGHGFHVAASS. Composition is skewed to polar residues over residues 385–401 and 472–486; these read NLSE…PVHQ and QPSP…TGNS. Aspartate 499 serves as the catalytic Nucleophile. Mg(2+)-binding residues include aspartate 499, aspartate 501, and aspartate 730. Residue aspartate 501 is the Proton donor of the active site.

This sequence belongs to the HAD-like hydrolase superfamily. EYA family. As to quaternary structure, interacts with Dac and So. Requires Mg(2+) as cofactor.

The protein localises to the nucleus. It catalyses the reaction O-phospho-L-tyrosyl-[protein] + H2O = L-tyrosyl-[protein] + phosphate. In terms of biological role, tyrosine phosphatase thought to play a role in transcription regulation during organogenesis through its intrinsic protein phosphatase activity. The phosphatase activity was shown in vitro. Appears to function together with So and Dac in eye development. Required for the survival of eye progenitor cells at a critical stage in morphogenesis. The polypeptide is Protein phosphatase eya (eya) (Drosophila melanogaster (Fruit fly)).